The chain runs to 544 residues: Protein angel homolog 2 (544 aa).

Belongs to the CCR4/nocturin family.

The polypeptide is Protein angel homolog 2 (Angel2) (Mus musculus (Mouse)).